The sequence spans 335 residues: Methionine import ATP-binding protein MetN 1 (335 aa).

Residues 2-242 (IEFHNVHKTY…PQHPTTRRFV (241 aa)) form the ABC transporter domain. 38-45 (GHSGAGKS) lines the ATP pocket.

The protein belongs to the ABC transporter superfamily. Methionine importer (TC 3.A.1.24) family. As to quaternary structure, the complex is composed of two ATP-binding proteins (MetN), two transmembrane proteins (MetI) and a solute-binding protein (MetQ).

Its subcellular location is the cell inner membrane. It carries out the reaction L-methionine(out) + ATP + H2O = L-methionine(in) + ADP + phosphate + H(+). The catalysed reaction is D-methionine(out) + ATP + H2O = D-methionine(in) + ADP + phosphate + H(+). Functionally, part of the ABC transporter complex MetNIQ involved in methionine import. Responsible for energy coupling to the transport system. In Pseudomonas savastanoi pv. phaseolicola (strain 1448A / Race 6) (Pseudomonas syringae pv. phaseolicola (strain 1448A / Race 6)), this protein is Methionine import ATP-binding protein MetN 1.